Here is a 1404-residue protein sequence, read N- to C-terminus: DNA-directed RNA polymerase subunit beta' (1404 aa).

Zn(2+)-binding residues include Cys-70, Cys-72, Cys-85, and Cys-88. Mg(2+)-binding residues include Asp-460, Asp-462, and Asp-464. Cys-825, Cys-899, Cys-906, and Cys-909 together coordinate Zn(2+).

It belongs to the RNA polymerase beta' chain family. The RNAP catalytic core consists of 2 alpha, 1 beta, 1 beta' and 1 omega subunit. When a sigma factor is associated with the core the holoenzyme is formed, which can initiate transcription. It depends on Mg(2+) as a cofactor. Requires Zn(2+) as cofactor.

It carries out the reaction RNA(n) + a ribonucleoside 5'-triphosphate = RNA(n+1) + diphosphate. Functionally, DNA-dependent RNA polymerase catalyzes the transcription of DNA into RNA using the four ribonucleoside triphosphates as substrates. In Nitrosomonas eutropha (strain DSM 101675 / C91 / Nm57), this protein is DNA-directed RNA polymerase subunit beta'.